A 688-amino-acid chain; its full sequence is MIDRYKHQQLRIGLVSPQQISAWATKKIPNGEIVGEVTKPYTFHYKTNKPEKDGLFCERIFGPIKSGICACGNYRVIGDEKGDPKFCEQCGVEFVDSRIRRYQMGYIKLTCPVTHVWYLKRLPSYIANLLDKPLKELEGLVYCDVCFDRNPNFSFARPITKKPTFLRLRGSFEYEIQSWKYSIPLFFTTQGFEIFRNREISTGAGAIREQLADLDLRIIIENSLVEWKQLGEEGPTGNEWEDRKIVRRKDFLVRRMELAKHFIRTNIEPEWMVLCLLPVLPPELRPIIQIEGGKLMSSDINELYRRVIYRNNTLTDLLTTSRSTPGELVMCQEKLVQEAVDTLLDNGIRGQPMRDGHNKVYKSFSDVIEGKEGRFRETLLGKRVDYSGRSVIVVGPSLSLHRCGLPREIAIELFQTFVIRGLIRQHLASNIGVAKSQIREKKPIVWEILQEVMQGHPVLLNRAPTLHRLGIQSFQPILVEGRTICLHPLVCKGFNADFDGDQMAVHVPLSLEAQAEARLLMFSHMNLLSPAIGDPISVPTQDMLIGLYVLTSGTRRGICANRYNPCNRKNYQNERIYETNYKYMKEPFFCNSYDAIGAYRQKRINLDSPLWLRWQLDQRVIASKEVPIEVHYESFGNYHEIYAHYLIVRSVKKETLYIYIRTTVGHISLYREIEEAIQGFSQACSYDT.

Zn(2+) is bound by residues cysteine 69, cysteine 71, cysteine 87, and cysteine 90. Aspartate 497, aspartate 499, and aspartate 501 together coordinate Mg(2+).

The protein belongs to the RNA polymerase beta' chain family. RpoC1 subfamily. As to quaternary structure, in plastids the minimal PEP RNA polymerase catalytic core is composed of four subunits: alpha, beta, beta', and beta''. When a (nuclear-encoded) sigma factor is associated with the core the holoenzyme is formed, which can initiate transcription. Requires Mg(2+) as cofactor. The cofactor is Zn(2+).

The protein resides in the plastid. It is found in the chloroplast. It carries out the reaction RNA(n) + a ribonucleoside 5'-triphosphate = RNA(n+1) + diphosphate. Functionally, DNA-dependent RNA polymerase catalyzes the transcription of DNA into RNA using the four ribonucleoside triphosphates as substrates. This is DNA-directed RNA polymerase subunit beta' from Sinapis alba (White mustard).